The primary structure comprises 390 residues: 8-demethyl-8-(2-methoxy-alpha-L-rhamnosyl)-tetracenomycin-C 3'-O-methyltransferase (390 aa).

S-adenosyl-L-methionine-binding positions include 202 to 208, serine 217, aspartate 234, 252 to 253, and aspartate 275; these read ELGIGGY and SQ. Position 275 (aspartate 275) interacts with Mg(2+). The active-site Proton acceptor is histidine 278. Mg(2+) is bound by residues glutamate 303 and aspartate 304.

Belongs to the methyltransferase OleY/MycE family. The cofactor is Mg(2+).

It catalyses the reaction 8-demethyl-8-(2-O-methyl-alpha-L-rhamnosyl)-tetracenomycin C + S-adenosyl-L-methionine = 8-demethyl-8-(2,3-di-O-methyl-alpha-L-rhamnosyl)-tetracenomycin C + S-adenosyl-L-homocysteine + H(+). The protein operates within antibiotic biosynthesis. In terms of biological role, O-methyltransferase involved in the biosynthesis of the permethylated L-rhamnose moiety of elloramycin, an antitumor polyketide. Mediates the methylation of the hydroxy groups at the 3'-position after the sugar moiety has been attached to the aglycon. The protein is 8-demethyl-8-(2-methoxy-alpha-L-rhamnosyl)-tetracenomycin-C 3'-O-methyltransferase of Streptomyces olivaceus.